The primary structure comprises 256 residues: Leucyl/phenylalanyl-tRNA--protein transferase (256 aa).

The protein belongs to the L/F-transferase family.

It is found in the cytoplasm. It carries out the reaction N-terminal L-lysyl-[protein] + L-leucyl-tRNA(Leu) = N-terminal L-leucyl-L-lysyl-[protein] + tRNA(Leu) + H(+). The enzyme catalyses N-terminal L-arginyl-[protein] + L-leucyl-tRNA(Leu) = N-terminal L-leucyl-L-arginyl-[protein] + tRNA(Leu) + H(+). It catalyses the reaction L-phenylalanyl-tRNA(Phe) + an N-terminal L-alpha-aminoacyl-[protein] = an N-terminal L-phenylalanyl-L-alpha-aminoacyl-[protein] + tRNA(Phe). In terms of biological role, functions in the N-end rule pathway of protein degradation where it conjugates Leu, Phe and, less efficiently, Met from aminoacyl-tRNAs to the N-termini of proteins containing an N-terminal arginine or lysine. The chain is Leucyl/phenylalanyl-tRNA--protein transferase from Hydrogenovibrio crunogenus (strain DSM 25203 / XCL-2) (Thiomicrospira crunogena).